The chain runs to 330 residues: Mas-related G-protein coupled receptor member X2 (330 aa).

Residues 1-33 (MDPTTLVWGTESTTMNGNDQALPLLCGKETLIL) lie on the Extracellular side of the membrane. Residues 34–54 (VVLILFIALVGLVGNAFVLWL) traverse the membrane as a helical segment. Residues 55–63 (LGFRMRRNA) lie on the Cytoplasmic side of the membrane. The chain crosses the membrane as a helical span at residues 64–84 (FSVYVLSLAGADFLFLCFPMI). Over 85–96 (NCLAYLINFFHS) the chain is Extracellular. Residues 97-117 (ISINFPSFFTTVMTCAYLAGL) form a helical membrane-spanning segment. Topologically, residues 118–144 (SMLSAISTERCLSVLWPIWYRSRRPRH) are cytoplasmic. The chain crosses the membrane as a helical span at residues 145–165 (LSAVMCVLLWALSLLLSILEG). Residues 166–184 (KFCGFLFSDGDSGWCQTFD) lie on the Extracellular side of the membrane. Residues 185-205 (FITAAWLMFLFVVLCGSSLAL) traverse the membrane as a helical segment. Residues 206 to 228 (LVRILCGSRGLPLTRLYLTILLT) lie on the Cytoplasmic side of the membrane. A helical transmembrane segment spans residues 229–249 (VLIFLLCGLPFGIQWFLILWI). Residues 250–264 (WKNSDVLFCHIHPVS) lie on the Extracellular side of the membrane. A helical transmembrane segment spans residues 265 to 285 (VVLSSFNSSANPIIYFFVGSF). Over 286–330 (RKQWRLRQPVLKLALQRALQDTAEVDHSEGCFSQGTLEMSGSSLV) the chain is Cytoplasmic.

The protein belongs to the G-protein coupled receptor 1 family. Mas subfamily.

It localises to the cell membrane. Its function is as follows. Mast cell-specific receptor for basic secretagogues, i.e. cationic amphiphilic drugs, as well as endo- or exogenous peptides, consisting of a basic head group and a hydrophobic core. Recognizes and binds small molecules containing a cyclized tetrahydroisoquinoline (THIQ), such as non-steroidal neuromuscular blocking drugs (NMBDs), including tubocurarine and atracurium. In response to these compounds, mediates pseudo-allergic reactions characterized by histamine release, inflammation and airway contraction. This is Mas-related G-protein coupled receptor member X2 (MRGPRX2) from Trachypithecus francoisi (Francois' leaf monkey).